The following is a 388-amino-acid chain: Valine--pyruvate aminotransferase (388 aa).

Lys-234 is modified (N6-(pyridoxal phosphate)lysine).

The protein belongs to the class-I pyridoxal-phosphate-dependent aminotransferase family. Pyridoxal 5'-phosphate is required as a cofactor.

The enzyme catalyses L-valine + pyruvate = 3-methyl-2-oxobutanoate + L-alanine. The chain is Valine--pyruvate aminotransferase from Mycobacterium tuberculosis (strain ATCC 25618 / H37Rv).